We begin with the raw amino-acid sequence, 456 residues long: Glutathione reductase (456 aa).

FAD-binding residues include Ser-14, Gly-15, Glu-34, Thr-41, Cys-42, and Lys-50. Glutathione is bound at residue Ser-14. Cysteines 42 and 47 form a disulfide. A glutathione-binding site is contributed by Tyr-99. Residue Gly-115 participates in FAD binding. NADP(+) is bound by residues Ala-180, Ile-183, Glu-186, Arg-203, Arg-209, and Gly-267. Asp-308 serves as a coordination point for FAD. Glu-315 contacts NADP(+). An FAD-binding site is contributed by Thr-317. Arg-325 provides a ligand contact to glutathione. Val-348 lines the NADP(+) pocket. FAD is bound at residue His-445. Residue His-445 is the Proton acceptor of the active site.

The protein belongs to the class-I pyridine nucleotide-disulfide oxidoreductase family. In terms of assembly, homodimer. Requires FAD as cofactor.

The protein resides in the cytoplasm. The catalysed reaction is 2 glutathione + NADP(+) = glutathione disulfide + NADPH + H(+). Catalyzes the reduction of glutathione disulfide (GSSG) to reduced glutathione (GSH). Constitutes the major mechanism to maintain a high GSH:GSSG ratio in the cytosol. This is Glutathione reductase (gor) from Haemophilus influenzae (strain ATCC 51907 / DSM 11121 / KW20 / Rd).